Here is a 139-residue protein sequence, read N- to C-terminus: Lamprin 0.9 (139 aa).

The signal sequence occupies residues 1–19; sequence MAAAIQALLVLALLHLATA. 8 repeat units span residues 42–46, 47–51, 52–56, 57–61, 62–66, 67–71, 92–96, and 106–110. Residues 42–110 are 8 X 5 AA approximate repeats; it reads GGLGYGGLGY…YHHALGGLGY (69 aa).

The polymeric lamprin chains self-aggregate to form fibers and have secondary structures particularly rich in beta-sheets and in beta-turns.

Its subcellular location is the secreted. The protein localises to the extracellular space. It is found in the extracellular matrix. In terms of biological role, self-aggregating protein that is part of the soluble form of lamprin. The polypeptide is Lamprin 0.9 (Petromyzon marinus (Sea lamprey)).